The primary structure comprises 208 residues: Rac-like GTP-binding protein ARAC8 (208 aa).

Position 15–22 (15–22 (GDGAVGKT)) interacts with GTP. The Effector region motif lies at 37-45 (YIPTVFDNF). Residues 62–66 (DTAGQ) and 120–123 (TKMD) each bind GTP. 2 S-palmitoyl cysteine lipidation sites follow: Cys199 and Cys205.

It belongs to the small GTPase superfamily. Rho family. In terms of assembly, interacts with ICR1. Binds to SPK1. Post-translationally, although this sequence has a C-terminal -CXXX, it is palmitoylated at Cys-205, rather than prenylated.

It localises to the membrane. Its function is as follows. Acts as a negative regulator of abscisic acid (ABA) responses. This Arabidopsis thaliana (Mouse-ear cress) protein is Rac-like GTP-binding protein ARAC8 (ARAC8).